Reading from the N-terminus, the 143-residue chain is Large ribosomal subunit protein uL11 (143 aa).

This sequence belongs to the universal ribosomal protein uL11 family. As to quaternary structure, part of the ribosomal stalk of the 50S ribosomal subunit. Interacts with L10 and the large rRNA to form the base of the stalk. L10 forms an elongated spine to which L12 dimers bind in a sequential fashion forming a multimeric L10(L12)X complex. One or more lysine residues are methylated.

Functionally, forms part of the ribosomal stalk which helps the ribosome interact with GTP-bound translation factors. This is Large ribosomal subunit protein uL11 from Caulobacter sp. (strain K31).